The following is a 456-amino-acid chain: MLNSAMSVVILAAGKGTRMYSDIPKVLHTLAGKPMVQHVIDAATKLGAAQVHLVYGHGGELLKQTLKDDKLNWVLQAEQLGTGHAMQQAAPFFSDDEDILMLYGDVPLISVETLQRLRDAKPQGGIGLLTVKLDDPSGYGRITRENGKVTGIVEHKDATDEQRQIQEINTGILIANGADLKRWLSKLTNNNAQGEYYITDIIALAYQEGREIAAVHPARISETDGVNNRLQLSRLERIYQAEQAEKLLLSGVMLRDPARFDLRGTLHCGMDVEIDANVIIEGYVTLGHRVKIGAGCIIKNSVIGDDCEISPYSVVEDAHLEAACTIGPFARLRPGAELLAGAHVGNFVEMKKARLGKGSKAGHLTYLGDAEIGDNVNIGAGTITCNYDGANKFKTVIDDDVFVGSDTQLVAPVTVGKGATIAAGTTVTRNVADNELVLSRVPQVHKQGWQRPVKKK.

The tract at residues Met-1–Arg-229 is pyrophosphorylase. UDP-N-acetyl-alpha-D-glucosamine contacts are provided by residues Leu-11–Gly-14, Lys-25, Gln-76, Gly-81–Thr-82, Tyr-103–Asp-105, Gly-140, Glu-154, Asn-169, and Asn-227. Asp-105 lines the Mg(2+) pocket. Residue Asn-227 participates in Mg(2+) binding. The segment at Leu-230–Ser-250 is linker. The segment at Gly-251–Lys-456 is N-acetyltransferase. UDP-N-acetyl-alpha-D-glucosamine is bound by residues Arg-333 and Lys-351. Catalysis depends on His-363, which acts as the Proton acceptor. Residues Tyr-366 and Asn-377 each coordinate UDP-N-acetyl-alpha-D-glucosamine. Acetyl-CoA is bound by residues Ala-380, Asn-386–Tyr-387, Ser-405, Ala-423, and Arg-440.

The protein in the N-terminal section; belongs to the N-acetylglucosamine-1-phosphate uridyltransferase family. It in the C-terminal section; belongs to the transferase hexapeptide repeat family. In terms of assembly, homotrimer. The cofactor is Mg(2+).

The protein localises to the cytoplasm. The catalysed reaction is alpha-D-glucosamine 1-phosphate + acetyl-CoA = N-acetyl-alpha-D-glucosamine 1-phosphate + CoA + H(+). The enzyme catalyses N-acetyl-alpha-D-glucosamine 1-phosphate + UTP + H(+) = UDP-N-acetyl-alpha-D-glucosamine + diphosphate. The protein operates within nucleotide-sugar biosynthesis; UDP-N-acetyl-alpha-D-glucosamine biosynthesis; N-acetyl-alpha-D-glucosamine 1-phosphate from alpha-D-glucosamine 6-phosphate (route II): step 2/2. Its pathway is nucleotide-sugar biosynthesis; UDP-N-acetyl-alpha-D-glucosamine biosynthesis; UDP-N-acetyl-alpha-D-glucosamine from N-acetyl-alpha-D-glucosamine 1-phosphate: step 1/1. It participates in bacterial outer membrane biogenesis; LPS lipid A biosynthesis. Its function is as follows. Catalyzes the last two sequential reactions in the de novo biosynthetic pathway for UDP-N-acetylglucosamine (UDP-GlcNAc). The C-terminal domain catalyzes the transfer of acetyl group from acetyl coenzyme A to glucosamine-1-phosphate (GlcN-1-P) to produce N-acetylglucosamine-1-phosphate (GlcNAc-1-P), which is converted into UDP-GlcNAc by the transfer of uridine 5-monophosphate (from uridine 5-triphosphate), a reaction catalyzed by the N-terminal domain. The chain is Bifunctional protein GlmU from Salmonella paratyphi A (strain ATCC 9150 / SARB42).